Here is an 80-residue protein sequence, read N- to C-terminus: Small ribosomal subunit protein bS16 (80 aa).

This sequence belongs to the bacterial ribosomal protein bS16 family.

The protein is Small ribosomal subunit protein bS16 of Nitrosococcus oceani (strain ATCC 19707 / BCRC 17464 / JCM 30415 / NCIMB 11848 / C-107).